The following is a 243-amino-acid chain: Phosphoadenosine 5'-phosphosulfate reductase (243 aa).

Catalysis depends on C239, which acts as the Nucleophile; cysteine thiosulfonate intermediate.

The protein belongs to the PAPS reductase family. CysH subfamily.

The protein localises to the cytoplasm. The enzyme catalyses [thioredoxin]-disulfide + sulfite + adenosine 3',5'-bisphosphate + 2 H(+) = [thioredoxin]-dithiol + 3'-phosphoadenylyl sulfate. It functions in the pathway sulfur metabolism; hydrogen sulfide biosynthesis; sulfite from sulfate: step 3/3. Functionally, catalyzes the formation of sulfite from phosphoadenosine 5'-phosphosulfate (PAPS) using thioredoxin as an electron donor. The chain is Phosphoadenosine 5'-phosphosulfate reductase from Proteus mirabilis (strain HI4320).